The following is a 77-amino-acid chain: Sec-independent protein translocase protein TatA (77 aa).

A helical membrane pass occupies residues 1-21 (MGGLSIWHWLIVLLIVALVFG). The disordered stretch occupies residues 43 to 77 (MKESEAPADAQQLPRSGSVNVDAKDAARSSDSNKA). Residues 64-77 (DAKDAARSSDSNKA) show a composition bias toward basic and acidic residues.

It belongs to the TatA/E family. As to quaternary structure, the Tat system comprises two distinct complexes: a TatABC complex, containing multiple copies of TatA, TatB and TatC subunits, and a separate TatA complex, containing only TatA subunits. Substrates initially bind to the TatABC complex, which probably triggers association of the separate TatA complex to form the active translocon.

It is found in the cell inner membrane. In terms of biological role, part of the twin-arginine translocation (Tat) system that transports large folded proteins containing a characteristic twin-arginine motif in their signal peptide across membranes. TatA could form the protein-conducting channel of the Tat system. The chain is Sec-independent protein translocase protein TatA from Burkholderia mallei (strain NCTC 10247).